We begin with the raw amino-acid sequence, 892 residues long: Translation initiation factor IF-2 (892 aa).

The disordered stretch occupies residues 88 to 305 (KKRTFVKRDP…SLQQGFQKPA (218 aa)). Basic and acidic residues-rich tracts occupy residues 93–159 (VKRD…KDKV) and 166–216 (DMTK…EENK). The span at 254-269 (GRGRNAKAARPAKKGK) shows a compositional bias: basic residues. The span at 270-282 (HAESKADREEARA) shows a compositional bias: basic and acidic residues. In terms of domain architecture, tr-type G spans 391 to 560 (PRAPVVTIMG…LLQAEVLELK (170 aa)). The G1 stretch occupies residues 400–407 (GHVDHGKT). GTP is bound at residue 400-407 (GHVDHGKT). Residues 425–429 (GITQH) are G2. Residues 446-449 (DTPG) form a G3 region. Residues 446 to 450 (DTPGH) and 500 to 503 (NKID) each bind GTP. The tract at residues 500-503 (NKID) is G4. Residues 536–538 (SAK) form a G5 region.

It belongs to the TRAFAC class translation factor GTPase superfamily. Classic translation factor GTPase family. IF-2 subfamily.

Its subcellular location is the cytoplasm. In terms of biological role, one of the essential components for the initiation of protein synthesis. Protects formylmethionyl-tRNA from spontaneous hydrolysis and promotes its binding to the 30S ribosomal subunits. Also involved in the hydrolysis of GTP during the formation of the 70S ribosomal complex. The chain is Translation initiation factor IF-2 from Salmonella paratyphi A (strain ATCC 9150 / SARB42).